The chain runs to 67 residues: Small ribosomal subunit protein eS17 (67 aa).

The protein belongs to the eukaryotic ribosomal protein eS17 family.

The polypeptide is Small ribosomal subunit protein eS17 (Korarchaeum cryptofilum (strain OPF8)).